A 366-amino-acid chain; its full sequence is MNKVVLLCRPGFEKECAAEITDKAGKREIFGFARVKENAGYVIYECYQPEDGEKLISELPFSSLIFARQWFVVGELLQHLPPEDRITPVVGMLQGVVEKGGELRVEVADTNESKELMKFCRKFTVPLRAALRDAGVLTNYETPKRPVVHVFFIAPGCCYTGYSFAHNNSPFYMGIPRLKFPSDAPSRSTLKLEEALHVFIPEDEWDERLANGMYAVDLGACPGGWTYQLVKRNMWVYSVDNGPMAQSLMDTGQVTWLREDGFRYRPNRNNISWMVCDMVEKPAKVTALMAQWLVNGWCRETIFNLKLPMKKRYEEVSHNLAYLQAQLDEHGVNAQIQARQLYHDREEVTVHVRRLWAAVGGRRDER.

S-adenosyl-L-methionine-binding positions include Ser188, 221–224, Asp240, Asp260, and Asp277; that span reads CPGG. Lys306 acts as the Proton acceptor in catalysis.

The protein belongs to the class I-like SAM-binding methyltransferase superfamily. RNA methyltransferase RlmE family. RlmM subfamily. Monomer.

The protein localises to the cytoplasm. The enzyme catalyses cytidine(2498) in 23S rRNA + S-adenosyl-L-methionine = 2'-O-methylcytidine(2498) in 23S rRNA + S-adenosyl-L-homocysteine + H(+). In terms of biological role, catalyzes the 2'-O-methylation at nucleotide C2498 in 23S rRNA. This chain is Ribosomal RNA large subunit methyltransferase M, found in Salmonella heidelberg (strain SL476).